The chain runs to 523 residues: MSQQVIIFDTTLRDGEQALQASLSVKEKLQIALALERMGVDVMEVGFPVSSPGDFESVQTIARQVKNSRVCALARCVEKDIDVAAESLKVAEAFRIHTFIATSPMHIATKLRSTLDEVIERAIYMVKRARNYTDDVEFSCEDAGRTPIADLARVVEAAINAGATTINIPDTVGYTMPFEFAGIISGLYERVPNIDKAIISVHTHDDLGLAVGNSLAAVHAGARQVEGAMNGIGERAGNCSLEEVIMAIKVRKDILNVHTAINHQEIWRTSQLVSQICNMPIPANKAIVGSGAFAHSSGIHQDGVLKNRENYEIMTPESIGLNQIQLNLTSRSGRAAVKHRMDEMGYKESEYNLDNLYDAFLKLADKKGQVFDYDLEALAFIGKQQEEPEHFRLDYFSVQSGSNDIATAAVKLACGEEVKAEAANGNGPVDAVYQAINRITDYNVELVKYSLTAKGHGKDALGQVDIVTNYNGRRFHGVGLATDIVESSAKAMVHVLNNIWRAAEVEKELQRKTQHNENNKETV.

The Pyruvate carboxyltransferase domain occupies 5-267 (VIIFDTTLRD…HTAINHQEIW (263 aa)). Residues D14, H202, H204, and N238 each coordinate Mn(2+). The tract at residues 392 to 523 (RLDYFSVQSG…QHNENNKETV (132 aa)) is regulatory domain.

This sequence belongs to the alpha-IPM synthase/homocitrate synthase family. LeuA type 1 subfamily. As to quaternary structure, homodimer. Mn(2+) serves as cofactor.

It is found in the cytoplasm. It carries out the reaction 3-methyl-2-oxobutanoate + acetyl-CoA + H2O = (2S)-2-isopropylmalate + CoA + H(+). It functions in the pathway amino-acid biosynthesis; L-leucine biosynthesis; L-leucine from 3-methyl-2-oxobutanoate: step 1/4. Its function is as follows. Catalyzes the condensation of the acetyl group of acetyl-CoA with 3-methyl-2-oxobutanoate (2-ketoisovalerate) to form 3-carboxy-3-hydroxy-4-methylpentanoate (2-isopropylmalate). In Shigella flexneri, this protein is 2-isopropylmalate synthase.